A 200-amino-acid chain; its full sequence is Holliday junction branch migration complex subunit RuvA (200 aa).

The segment at 1-63 (MYAYVKGKLT…EDAQLLYGFS (63 aa)) is domain I. A domain II region spans residues 64–142 (SEEEKDMFLS…ITEEDSDSLL (79 aa)). The segment at 143-149 (QVDATST) is flexible linker. Residues 150–200 (VQDQFVQEAMLALEALGYSKRELAKVEKTLNKNKYDSVDEAVKAGLQLVVS) form a domain III region.

Belongs to the RuvA family. Homotetramer. Forms an RuvA(8)-RuvB(12)-Holliday junction (HJ) complex. HJ DNA is sandwiched between 2 RuvA tetramers; dsDNA enters through RuvA and exits via RuvB. An RuvB hexamer assembles on each DNA strand where it exits the tetramer. Each RuvB hexamer is contacted by two RuvA subunits (via domain III) on 2 adjacent RuvB subunits; this complex drives branch migration. In the full resolvosome a probable DNA-RuvA(4)-RuvB(12)-RuvC(2) complex forms which resolves the HJ.

The protein localises to the cytoplasm. Functionally, the RuvA-RuvB-RuvC complex processes Holliday junction (HJ) DNA during genetic recombination and DNA repair, while the RuvA-RuvB complex plays an important role in the rescue of blocked DNA replication forks via replication fork reversal (RFR). RuvA specifically binds to HJ cruciform DNA, conferring on it an open structure. The RuvB hexamer acts as an ATP-dependent pump, pulling dsDNA into and through the RuvAB complex. HJ branch migration allows RuvC to scan DNA until it finds its consensus sequence, where it cleaves and resolves the cruciform DNA. This Staphylococcus aureus (strain Mu3 / ATCC 700698) protein is Holliday junction branch migration complex subunit RuvA.